The primary structure comprises 948 residues: Phosphoenolpyruvate carboxylase (948 aa).

Catalysis depends on residues His-138 and Lys-610.

It belongs to the PEPCase type 1 family. Mg(2+) serves as cofactor.

It carries out the reaction oxaloacetate + phosphate = phosphoenolpyruvate + hydrogencarbonate. In terms of biological role, forms oxaloacetate, a four-carbon dicarboxylic acid source for the tricarboxylic acid cycle. This is Phosphoenolpyruvate carboxylase from Streptococcus sanguinis (strain SK36).